We begin with the raw amino-acid sequence, 537 residues long: Chaperonin GroEL (537 aa).

ATP-binding positions include 29-32, 86-90, glycine 413, 477-479, and aspartate 493; these read TLGP, DGTTT, and NAA.

The protein belongs to the chaperonin (HSP60) family. As to quaternary structure, forms a cylinder of 14 subunits composed of two heptameric rings stacked back-to-back. Interacts with the co-chaperonin GroES.

It is found in the cytoplasm. The enzyme catalyses ATP + H2O + a folded polypeptide = ADP + phosphate + an unfolded polypeptide.. In terms of biological role, together with its co-chaperonin GroES, plays an essential role in assisting protein folding. The GroEL-GroES system forms a nano-cage that allows encapsulation of the non-native substrate proteins and provides a physical environment optimized to promote and accelerate protein folding. The sequence is that of Chaperonin GroEL from Bifidobacterium animalis subsp. lactis (strain AD011).